A 307-amino-acid polypeptide reads, in one-letter code: Transcription initiation factor IIB (307 aa).

A TFIIB-type zinc finger spans residues 11–42 (FTEECPACGSAEIVFDEERGEYVCANCGLVTE). Zn(2+) is bound by residues Cys15, Cys18, Cys34, and Cys37. Residues 48-69 (PGPEWRHFNPDQRQRRSRTGEP) form a disordered region. The segment covering 50 to 69 (PEWRHFNPDQRQRRSRTGEP) has biased composition (basic and acidic residues). A run of 2 repeats spans residues 123–207 (LELE…QRRL) and 218–299 (DHLP…EICE).

It belongs to the TFIIB family.

Its function is as follows. Stabilizes TBP binding to an archaeal box-A promoter. Also responsible for recruiting RNA polymerase II to the pre-initiation complex (DNA-TBP-TFIIB). The sequence is that of Transcription initiation factor IIB from Methanopyrus kandleri (strain AV19 / DSM 6324 / JCM 9639 / NBRC 100938).